The chain runs to 873 residues: Bifunctional uridylyltransferase/uridylyl-removing enzyme (873 aa).

Positions 1–332 (MAFQSPLTFN…NGGETEPAVI (332 aa)) are uridylyltransferase. Residues 333 to 692 (INEDFQRRGR…MSKKATRGGT (360 aa)) form a uridylyl-removing region. One can recognise an HD domain in the interval 451–573 (VDEHSVRLLN…VRDEERLEYL (123 aa)). ACT domains lie at 693 to 773 (EVFV…VKTR) and 800 to 873 (LMEL…ELAP).

Belongs to the GlnD family. It depends on Mg(2+) as a cofactor.

The enzyme catalyses [protein-PII]-L-tyrosine + UTP = [protein-PII]-uridylyl-L-tyrosine + diphosphate. The catalysed reaction is [protein-PII]-uridylyl-L-tyrosine + H2O = [protein-PII]-L-tyrosine + UMP + H(+). Uridylyltransferase (UTase) activity is inhibited by glutamine, while glutamine activates uridylyl-removing (UR) activity. Functionally, modifies, by uridylylation and deuridylylation, the PII regulatory proteins (GlnB and homologs), in response to the nitrogen status of the cell that GlnD senses through the glutamine level. Under low glutamine levels, catalyzes the conversion of the PII proteins and UTP to PII-UMP and PPi, while under higher glutamine levels, GlnD hydrolyzes PII-UMP to PII and UMP (deuridylylation). Thus, controls uridylylation state and activity of the PII proteins, and plays an important role in the regulation of nitrogen assimilation and metabolism. The sequence is that of Bifunctional uridylyltransferase/uridylyl-removing enzyme from Vibrio vulnificus (strain YJ016).